The following is a 278-amino-acid chain: Shikimate dehydrogenase (NADP(+)) (278 aa).

Residues 18 to 20 and Thr-65 contribute to the shikimate site; that span reads SKS. Lys-69 functions as the Proton acceptor in the catalytic mechanism. Residue Glu-81 coordinates NADP(+). The shikimate site is built by Asn-90 and Asp-106. Residues 130 to 134 and 154 to 159 contribute to the NADP(+) site; these read GAGGA and NRTFAK. Residue Tyr-223 coordinates shikimate. Position 241 (Gly-241) interacts with NADP(+).

It belongs to the shikimate dehydrogenase family. As to quaternary structure, homodimer.

It carries out the reaction shikimate + NADP(+) = 3-dehydroshikimate + NADPH + H(+). Its pathway is metabolic intermediate biosynthesis; chorismate biosynthesis; chorismate from D-erythrose 4-phosphate and phosphoenolpyruvate: step 4/7. Functionally, involved in the biosynthesis of the chorismate, which leads to the biosynthesis of aromatic amino acids. Catalyzes the reversible NADPH linked reduction of 3-dehydroshikimate (DHSA) to yield shikimate (SA). This chain is Shikimate dehydrogenase (NADP(+)), found in Vibrio cholerae serotype O1 (strain ATCC 39541 / Classical Ogawa 395 / O395).